We begin with the raw amino-acid sequence, 464 residues long: tRNA modification GTPase MnmE (464 aa).

Arg28, Glu90, and Arg129 together coordinate (6S)-5-formyl-5,6,7,8-tetrahydrofolate. One can recognise a TrmE-type G domain in the interval 226 to 385 (GLATAIVGRP…LEEKIAELFF (160 aa)). Residue Asn236 participates in K(+) binding. GTP is bound by residues 236 to 241 (NVGKSS), 255 to 261 (TDIAGTT), and 280 to 283 (DTAG). Ser240 serves as a coordination point for Mg(2+). The K(+) site is built by Thr255, Ile257, and Thr260. Residue Thr261 participates in Mg(2+) binding. Lys464 is a (6S)-5-formyl-5,6,7,8-tetrahydrofolate binding site.

The protein belongs to the TRAFAC class TrmE-Era-EngA-EngB-Septin-like GTPase superfamily. TrmE GTPase family. As to quaternary structure, homodimer. Heterotetramer of two MnmE and two MnmG subunits. It depends on K(+) as a cofactor.

The protein localises to the cytoplasm. In terms of biological role, exhibits a very high intrinsic GTPase hydrolysis rate. Involved in the addition of a carboxymethylaminomethyl (cmnm) group at the wobble position (U34) of certain tRNAs, forming tRNA-cmnm(5)s(2)U34. The protein is tRNA modification GTPase MnmE of Ligilactobacillus salivarius (strain UCC118) (Lactobacillus salivarius).